A 571-amino-acid chain; its full sequence is Protein tesmin/TSO1-like CXC 6 (571 aa).

5 disordered regions span residues 1 to 52 (MGEG…AAAS), 92 to 119 (IRHP…QKKK), 293 to 325 (NQGT…GGNA), 370 to 411 (LANQ…RSLS), and 507 to 571 (NGVS…KKDL). Positions 7–16 (GDKFPPKTDE) are enriched in basic and acidic residues. The region spanning 117 to 241 (KKKQCNCKHS…KCLDCKNFEG (125 aa)) is the CRC domain. Composition is skewed to polar residues over residues 293 to 319 (NQGT…QTGS), 373 to 388 (QKET…QGHV), and 508 to 539 (GVSQ…QTAK). Residues 540 to 557 (QPSQLTTTTTTPNTSSQT) are compositionally biased toward low complexity.

Belongs to the lin-54 family. As to expression, ubiquitous but expressed mostly in flowers.

The protein resides in the nucleus. In terms of biological role, plays a role in development of both male and female reproductive tissues. The polypeptide is Protein tesmin/TSO1-like CXC 6 (TCX6) (Arabidopsis thaliana (Mouse-ear cress)).